Here is a 363-residue protein sequence, read N- to C-terminus: Flagellar P-ring protein (363 aa).

Residues 1–20 (MKIKLILACALMVFSAASSA) form the signal peptide.

The protein belongs to the FlgI family. The basal body constitutes a major portion of the flagellar organelle and consists of four rings (L,P,S, and M) mounted on a central rod.

Its subcellular location is the periplasm. It is found in the bacterial flagellum basal body. Its function is as follows. Assembles around the rod to form the L-ring and probably protects the motor/basal body from shearing forces during rotation. In Shewanella loihica (strain ATCC BAA-1088 / PV-4), this protein is Flagellar P-ring protein.